We begin with the raw amino-acid sequence, 342 residues long: L-threonine 3-dehydrogenase (342 aa).

Residue C38 coordinates Zn(2+). Catalysis depends on charge relay system residues T40 and H43. The Zn(2+) site is built by H63, E64, C93, C96, C99, and C107. NAD(+)-binding positions include I175, D195, R200, L262 to I264, and I286 to Y287.

This sequence belongs to the zinc-containing alcohol dehydrogenase family. As to quaternary structure, homotetramer. It depends on Zn(2+) as a cofactor.

Its subcellular location is the cytoplasm. It carries out the reaction L-threonine + NAD(+) = (2S)-2-amino-3-oxobutanoate + NADH + H(+). It participates in amino-acid degradation; L-threonine degradation via oxydo-reductase pathway; glycine from L-threonine: step 1/2. Functionally, catalyzes the NAD(+)-dependent oxidation of L-threonine to 2-amino-3-ketobutyrate. This Burkholderia cenocepacia (strain HI2424) protein is L-threonine 3-dehydrogenase.